A 248-amino-acid polypeptide reads, in one-letter code: Tropomyosin alpha-4 chain (248 aa).

The residue at position 2 (alanine 2) is an N-acetylalanine. A coiled-coil region spans residues alanine 2–isoleucine 248. A Phosphoserine modification is found at serine 6. Residues alanine 16–glycine 47 form a disordered region. Basic and acidic residues predominate over residues arginine 33–glycine 47. N6-acetyllysine occurs at positions 177 and 215. At threonine 216 the chain carries Phosphothreonine.

It belongs to the tropomyosin family. As to quaternary structure, homodimer. Heterodimer of an alpha (TPM1, TPM3 or TPM4) and a beta (TPM2) chain.

It localises to the cytoplasm. It is found in the cytoskeleton. Its function is as follows. Binds to actin filaments in muscle and non-muscle cells. Plays a central role, in association with the troponin complex, in the calcium dependent regulation of vertebrate striated muscle contraction. Smooth muscle contraction is regulated by interaction with caldesmon. In non-muscle cells is implicated in stabilizing cytoskeleton actin filaments. Binds calcium. This is Tropomyosin alpha-4 chain (TPM4) from Equus caballus (Horse).